Consider the following 113-residue polypeptide: Large ribosomal subunit protein uL22 (113 aa).

The protein belongs to the universal ribosomal protein uL22 family. In terms of assembly, part of the 50S ribosomal subunit.

Functionally, this protein binds specifically to 23S rRNA; its binding is stimulated by other ribosomal proteins, e.g. L4, L17, and L20. It is important during the early stages of 50S assembly. It makes multiple contacts with different domains of the 23S rRNA in the assembled 50S subunit and ribosome. In terms of biological role, the globular domain of the protein is located near the polypeptide exit tunnel on the outside of the subunit, while an extended beta-hairpin is found that lines the wall of the exit tunnel in the center of the 70S ribosome. The chain is Large ribosomal subunit protein uL22 from Natranaerobius thermophilus (strain ATCC BAA-1301 / DSM 18059 / JW/NM-WN-LF).